We begin with the raw amino-acid sequence, 271 residues long: 3-methyl-2-oxobutanoate hydroxymethyltransferase 1 (271 aa).

2 residues coordinate Mg(2+): D53 and D92. Residues 53 to 54 (DS), D92, and K120 each bind 3-methyl-2-oxobutanoate. E122 lines the Mg(2+) pocket. E189 serves as the catalytic Proton acceptor.

The protein belongs to the PanB family. As to quaternary structure, homodecamer; pentamer of dimers. Requires Mg(2+) as cofactor.

The protein resides in the cytoplasm. The enzyme catalyses 3-methyl-2-oxobutanoate + (6R)-5,10-methylene-5,6,7,8-tetrahydrofolate + H2O = 2-dehydropantoate + (6S)-5,6,7,8-tetrahydrofolate. Its pathway is cofactor biosynthesis; (R)-pantothenate biosynthesis; (R)-pantoate from 3-methyl-2-oxobutanoate: step 1/2. Functionally, catalyzes the reversible reaction in which hydroxymethyl group from 5,10-methylenetetrahydrofolate is transferred onto alpha-ketoisovalerate to form ketopantoate. The chain is 3-methyl-2-oxobutanoate hydroxymethyltransferase 1 from Burkholderia cenocepacia (strain HI2424).